A 902-amino-acid polypeptide reads, in one-letter code: Transcription factor FPSE_08121 (902 aa).

Residues 1 to 47 form a disordered region; that stretch reads MVSPDNRPGTQGPSASAHAHDSRVPRKRPGSWDNNPSTAGNRAVKKR. The segment at residues 52 to 81 is a DNA-binding region (zn(2)-C6 fungal-type); sequence CVSCRDRKVRCDVVNGGPPCTNCRLDDVDC. Disordered stretches follow at residues 92–189, 208–234, 258–277, and 820–839; these read NPAR…EAEQ, HCEQ…PANP, ATEA…SANT, and TGVA…PNMT. Residues 120 to 137 show a composition bias toward low complexity; the sequence is TDADTAAPGPAPGSASAT. Over residues 168-177 the composition is skewed to acidic residues; it reads ETICDDDENE. Polar residues-rich tracts occupy residues 178–187, 220–234, 262–277, and 826–839; these read NNSWHNQQEA, GAAT…PANP, PPSS…SANT, and GQRS…PNMT.

The protein resides in the nucleus. Functionally, transcription factor; part of the Fusarium detoxification of benzoxazolinone cluster involved in the degradation of benzoxazolinones produced by the host plant. Maize, wheat, and rye produce the 2 benzoxazinone phytoanticipins 2,4-dihy-droxy-7-methoxy-1,4-benzoxazin-3-one (DIMBOA) and 2,4-dihydroxy-1,4-benzoxazin-3-one (DIBOA) that, due to their inherent instability once released, spontaneously degrade to the more stable corresponding benzoxazolinones, 6-methoxy-2-benzoxazolinone (MBOA) and 2-benzoxazolinone (BOA), respectively. FPSE_08121 positively regulates the expression of the FBD cluster gene FPSE_08120 in response to 2-aminophenol (2-AP) treatment and contributes quantitatively to benzoxazolinone tolerance. This chain is Transcription factor FPSE_08121, found in Fusarium pseudograminearum (strain CS3096) (Wheat and barley crown-rot fungus).